Here is an 811-residue protein sequence, read N- to C-terminus: Potassium transporter 27 (811 aa).

Residues 1–64 (MGDDVLGRGS…QEESWARTLK (64 aa)) are Cytoplasmic-facing. The chain crosses the membrane as a helical span at residues 65–85 (LAFQCVGILYGDIGTSPLFVY). The Extracellular segment spans residues 86-102 (SSTFKDGVRHPDDLLGA). The helical transmembrane segment at 103-123 (LSLIIYSFALFTIVKYVFIAL) threads the bilayer. Topologically, residues 124–188 (RANDDGDGGT…ELLETNRAVK (65 aa)) are cytoplasmic. Residues 189–209 (IWLFLLTILATAMVISDAVLT) form a helical membrane-spanning segment. The Extracellular portion of the chain corresponds to 210 to 226 (PAISVLSAVGGLKEKAP). Residues 227–247 (NLTTDEIVWITVATLVVLFAI) form a helical membrane-spanning segment. Over 248–254 (QRFGTDK) the chain is Cytoplasmic. A helical transmembrane segment spans residues 255 to 275 (IGYLFAPIILLWLLLIGCVGI). Residues 276-310 (YNTIKFDTGVLRAFNLKYIIDYFRRNKKDGWISLS) lie on the Extracellular side of the membrane. The chain crosses the membrane as a helical span at residues 311-331 (GILLCFTGTEALFSDLGYFSI). At 332–335 (RSIQ) the chain is on the cytoplasmic side. Residues 336–356 (LSFSFGLVPSVLLAYIGQAAY) form a helical membrane-spanning segment. The Extracellular segment spans residues 357-375 (LREHPEHIANTFYRSTPNV). Residues 376 to 396 (MFWPTFILAVAASIIGSQAMI) form a helical membrane-spanning segment. Residues 397-434 (SCAFATISHLQTLNCFPRVKILHTSRQYSGQLYIPEVN) lie on the Cytoplasmic side of the membrane. The chain crosses the membrane as a helical span at residues 435 to 455 (FLLCVGACLVTIGFKTTVIIG). The Extracellular segment spans residues 456 to 459 (EAHA). Residues 460-480 (ICVVFVMIITTLLLTIVMLLV) traverse the membrane as a helical segment. At 481 to 482 (WK) the chain is on the cytoplasmic side. Residues 483–503 (VSIWYVALFFIVFMSSESIYL) traverse the membrane as a helical segment. Topologically, residues 504–515 (SAVLYQFVHGEY) are extracellular. A helical transmembrane segment spans residues 516-536 (VPVAMSVFLMIVMTVWHYVHV). Topologically, residues 537–811 (KRYEFELEHT…VLKVGIAYEI (275 aa)) are cytoplasmic.

It belongs to the HAK/KUP transporter (TC 2.A.72.3) family.

It is found in the membrane. Its function is as follows. High-affinity potassium transporter. The chain is Potassium transporter 27 (HAK27) from Oryza sativa subsp. japonica (Rice).